A 427-amino-acid polypeptide reads, in one-letter code: Enolase (427 aa).

Gln-163 provides a ligand contact to (2R)-2-phosphoglycerate. The Proton donor role is filled by Glu-205. The Mg(2+) site is built by Asp-242, Glu-285, and Asp-312. 4 residues coordinate (2R)-2-phosphoglycerate: Lys-337, Arg-366, Ser-367, and Lys-388. The active-site Proton acceptor is Lys-337.

The protein belongs to the enolase family. The cofactor is Mg(2+).

It localises to the cytoplasm. Its subcellular location is the secreted. The protein resides in the cell surface. The catalysed reaction is (2R)-2-phosphoglycerate = phosphoenolpyruvate + H2O. It participates in carbohydrate degradation; glycolysis; pyruvate from D-glyceraldehyde 3-phosphate: step 4/5. In terms of biological role, catalyzes the reversible conversion of 2-phosphoglycerate (2-PG) into phosphoenolpyruvate (PEP). It is essential for the degradation of carbohydrates via glycolysis. This Variovorax paradoxus (strain S110) protein is Enolase.